Consider the following 309-residue polypeptide: NAD kinase (309 aa).

Residue D89 is the Proton acceptor of the active site. NAD(+) is bound by residues 89–90 (DG), 163–164 (NE), H174, R191, D193, and 204–209 (TAYALS).

It belongs to the NAD kinase family. The cofactor is a divalent metal cation.

The protein localises to the cytoplasm. It catalyses the reaction NAD(+) + ATP = ADP + NADP(+) + H(+). Its function is as follows. Involved in the regulation of the intracellular balance of NAD and NADP, and is a key enzyme in the biosynthesis of NADP. Catalyzes specifically the phosphorylation on 2'-hydroxyl of the adenosine moiety of NAD to yield NADP. In Shewanella sp. (strain ANA-3), this protein is NAD kinase.